The sequence spans 239 residues: Fatty acid metabolism regulator protein (239 aa).

Positions 6–74 constitute an HTH gntR-type domain; the sequence is QSPAGFAEEY…HGKPTKVNNF (69 aa). Residues 34 to 53 constitute a DNA-binding region (H-T-H motif); the sequence is ERELSELIGVTRTTLREVLQ.

Homodimer.

It localises to the cytoplasm. In terms of biological role, multifunctional regulator of fatty acid metabolism. The polypeptide is Fatty acid metabolism regulator protein (Serratia proteamaculans (strain 568)).